The following is a 144-amino-acid chain: F420-non-reducing hydrogenase vhc iron-sulfur subunit D (144 aa).

The protein belongs to the MvhD/VhuD family. In terms of assembly, the F420-non-reducing hydrogenase vhc is composed of three subunits; VhcA, VhcD and VhcG. [2Fe-2S] cluster serves as cofactor.

The protein is F420-non-reducing hydrogenase vhc iron-sulfur subunit D (vhcD) of Methanococcus voltae.